Here is a 317-residue protein sequence, read N- to C-terminus: Melanocyte-stimulating hormone receptor (317 aa).

The Extracellular segment spans residues Met-1 to Glu-37. N-linked (GlcNAc...) asparagine glycosylation occurs at Asn-29. Residues Val-38–Ile-63 traverse the membrane as a helical segment. Topologically, residues Ala-64–Pro-72 are cytoplasmic. A helical membrane pass occupies residues Met-73–Leu-93. At Glu-94–Asn-118 the chain is on the extracellular side. Residues Val-119–Val-140 traverse the membrane as a helical segment. Residues Asp-141–Arg-163 are Cytoplasmic-facing. A helical transmembrane segment spans residues Ile-164–Tyr-183. Topologically, residues Asn-184–Cys-191 are extracellular. Residues Leu-192–Leu-211 form a helical membrane-spanning segment. The Cytoplasmic portion of the chain corresponds to Ala-212–Ala-240. A helical transmembrane segment spans residues Ala-241–Leu-266. Over Cys-267–Asn-279 the chain is Extracellular. The helical transmembrane segment at Phe-280–Phe-300 threads the bilayer. The Cytoplasmic segment spans residues Arg-301–Trp-317. Cys-315 carries S-palmitoyl cysteine lipidation.

This sequence belongs to the G-protein coupled receptor 1 family. As to quaternary structure, interacts with MGRN1, but does not undergo MGRN1-mediated ubiquitination; this interaction competes with GNAS-binding and thus inhibits agonist-induced cAMP production. Interacts with OPN3; the interaction results in a decrease in MC1R-mediated cAMP signaling and ultimately a decrease in melanin production in melanocytes.

It is found in the cell membrane. Receptor for MSH (alpha, beta and gamma) and ACTH. The activity of this receptor is mediated by G proteins which activate adenylate cyclase. Mediates melanogenesis, the production of eumelanin (black/brown) and phaeomelanin (red/yellow), via regulation of cAMP signaling in melanocytes. The chain is Melanocyte-stimulating hormone receptor (MC1R) from Rangifer tarandus (Reindeer).